Here is a 491-residue protein sequence, read N- to C-terminus: Ketol-acid reductoisomerase (NADP(+)) (491 aa).

In terms of domain architecture, KARI N-terminal Rossmann spans 15–208; the sequence is AQLGKCRFMG…GGHRAGVLES (194 aa). NADP(+)-binding positions include 45–48, R68, R76, S78, and 108–110; these read CGAQ and DKQ. The active site involves H132. G158 lines the NADP(+) pocket. 2 consecutive KARI C-terminal knotted domains span residues 209 to 344 and 345 to 484; these read SFVA…TAPQ and FEGK…MTDM. Residues D217, E221, E389, and E393 each coordinate Mg(2+). S414 is a binding site for substrate.

It belongs to the ketol-acid reductoisomerase family. The cofactor is Mg(2+).

The enzyme catalyses (2R)-2,3-dihydroxy-3-methylbutanoate + NADP(+) = (2S)-2-acetolactate + NADPH + H(+). The catalysed reaction is (2R,3R)-2,3-dihydroxy-3-methylpentanoate + NADP(+) = (S)-2-ethyl-2-hydroxy-3-oxobutanoate + NADPH + H(+). It participates in amino-acid biosynthesis; L-isoleucine biosynthesis; L-isoleucine from 2-oxobutanoate: step 2/4. The protein operates within amino-acid biosynthesis; L-valine biosynthesis; L-valine from pyruvate: step 2/4. Involved in the biosynthesis of branched-chain amino acids (BCAA). Catalyzes an alkyl-migration followed by a ketol-acid reduction of (S)-2-acetolactate (S2AL) to yield (R)-2,3-dihydroxy-isovalerate. In the isomerase reaction, S2AL is rearranged via a Mg-dependent methyl migration to produce 3-hydroxy-3-methyl-2-ketobutyrate (HMKB). In the reductase reaction, this 2-ketoacid undergoes a metal-dependent reduction by NADPH to yield (R)-2,3-dihydroxy-isovalerate. This Salmonella schwarzengrund (strain CVM19633) protein is Ketol-acid reductoisomerase (NADP(+)).